The primary structure comprises 592 residues: Aspartate--tRNA(Asp/Asn) ligase (592 aa).

An L-aspartate-binding site is contributed by Glu-172. The tract at residues 196-199 is aspartate; sequence QLFK. L-aspartate is bound at residue Arg-218. ATP is bound by residues 218-220 and Gln-227; that span reads RDE. Position 450 (His-450) interacts with L-aspartate. Residue Glu-484 coordinates ATP. Arg-491 is a binding site for L-aspartate. 536–539 contacts ATP; it reads GLDR.

The protein belongs to the class-II aminoacyl-tRNA synthetase family. Type 1 subfamily. As to quaternary structure, homodimer.

The protein localises to the cytoplasm. It carries out the reaction tRNA(Asx) + L-aspartate + ATP = L-aspartyl-tRNA(Asx) + AMP + diphosphate. In terms of biological role, aspartyl-tRNA synthetase with relaxed tRNA specificity since it is able to aspartylate not only its cognate tRNA(Asp) but also tRNA(Asn). Reaction proceeds in two steps: L-aspartate is first activated by ATP to form Asp-AMP and then transferred to the acceptor end of tRNA(Asp/Asn). This Thioalkalivibrio sulfidiphilus (strain HL-EbGR7) protein is Aspartate--tRNA(Asp/Asn) ligase.